Consider the following 296-residue polypeptide: MSNPQFRAGFVAIVGRPNVGKSTLTNALIGTKISIVSRKAQTTRHRIHGVLTREHEQFVFVDTPGFQTRHGGAMNRMMNRVVTQALADVDVVVHVVEAGKWSEGDAKLLPLLPKSRRSILVVSKIDALKNRDELFPFVSKLMALHAYDAVVPVSATKGQQLDQLLDEIAAGLPQGDPMFEEDTLTDRPVRFIAAELVREKIFRLVGDELPYGCTVVIEQWEETERGVRIAACVVVERESHRPILLGAGGMHMKRIATEARQDIAKLLDMPVHLEIYIKVRKGWSDREGALRDLGYE.

The 168-residue stretch at 7 to 174 (RAGFVAIVGR…LDEIAAGLPQ (168 aa)) folds into the Era-type G domain. The tract at residues 15–22 (GRPNVGKS) is G1. 15–22 (GRPNVGKS) is a binding site for GTP. The segment at 41–45 (QTTRH) is G2. The segment at 62-65 (DTPG) is G3. Residues 62-66 (DTPGF) and 123-126 (SKID) contribute to the GTP site. Positions 123–126 (SKID) are G4. Residues 153 to 155 (VSA) are G5. Residues 205–281 (VGDELPYGCT…HLEIYIKVRK (77 aa)) form the KH type-2 domain.

The protein belongs to the TRAFAC class TrmE-Era-EngA-EngB-Septin-like GTPase superfamily. Era GTPase family. Monomer.

The protein localises to the cytoplasm. The protein resides in the cell inner membrane. An essential GTPase that binds both GDP and GTP, with rapid nucleotide exchange. Plays a role in 16S rRNA processing and 30S ribosomal subunit biogenesis and possibly also in cell cycle regulation and energy metabolism. The chain is GTPase Era from Bordetella parapertussis (strain 12822 / ATCC BAA-587 / NCTC 13253).